The primary structure comprises 728 residues: Catalase-peroxidase (728 aa).

A cross-link (tryptophyl-tyrosyl-methioninium (Trp-Tyr) (with M-244)) is located at residues 91 to 218 (WHSAGTYRTA…LAAVQMGLIY (128 aa)). His92 acts as the Proton acceptor in catalysis. Residues 218-244 (YVNPEGPDGNPDPVAAARDIRDTFARM) constitute a cross-link (tryptophyl-tyrosyl-methioninium (Tyr-Met) (with W-91)). His259 serves as a coordination point for heme b.

It belongs to the peroxidase family. Peroxidase/catalase subfamily. Homodimer or homotetramer. It depends on heme b as a cofactor. Post-translationally, formation of the three residue Trp-Tyr-Met cross-link is important for the catalase, but not the peroxidase activity of the enzyme.

It carries out the reaction H2O2 + AH2 = A + 2 H2O. The enzyme catalyses 2 H2O2 = O2 + 2 H2O. In terms of biological role, bifunctional enzyme with both catalase and broad-spectrum peroxidase activity. The chain is Catalase-peroxidase from Burkholderia pseudomallei (strain 1710b).